Reading from the N-terminus, the 93-residue chain is MRTLTLLITLLLLALHTQAESPQERAKAAPDQDMVMEDQDIFISFGGYKGTVLQDAVVKAGQACYCRIGACVSGERLTGACGLNGRIYRLCCR.

The first 19 residues, 1–19, serve as a signal peptide directing secretion; the sequence is MRTLTLLITLLLLALHTQA. Positions 20–62 are excised as a propeptide; the sequence is ESPQERAKAAPDQDMVMEDQDIFISFGGYKGTVLQDAVVKAGQ. 3 disulfide bridges follow: cysteine 64/cysteine 92, cysteine 66/cysteine 81, and cysteine 71/cysteine 91.

The protein belongs to the alpha-defensin family. Expressed in neutrophils (at protein level). Highest expression in bone marrow and to a much lesser extent in small intestine.

The protein resides in the secreted. Its function is as follows. Host-defense peptide that has antimicrobial activity against Gram-positive and Gram-negative bacteria and fungi (in vitro). Exhibits activity against E.coli, A.calcoaceticus, S,aureus and C.albicans. This Rattus norvegicus (Rat) protein is Defensin alpha 4.